The sequence spans 550 residues: Hydroxylamine reductase (550 aa).

[2Fe-2S] cluster contacts are provided by Cys4, Cys7, Cys19, and Cys26. Hybrid [4Fe-2O-2S] cluster-binding residues include His249, Glu273, Cys317, Cys405, Cys433, Cys458, Glu492, and Lys494. At Cys405 the chain carries Cysteine persulfide.

It belongs to the HCP family. The cofactor is [2Fe-2S] cluster. Hybrid [4Fe-2O-2S] cluster serves as cofactor.

It is found in the cytoplasm. It carries out the reaction A + NH4(+) + H2O = hydroxylamine + AH2 + H(+). Functionally, catalyzes the reduction of hydroxylamine to form NH(3) and H(2)O. This Aeromonas salmonicida (strain A449) protein is Hydroxylamine reductase.